The chain runs to 145 residues: D-aminoacyl-tRNA deacylase (145 aa).

Residues Gly-137 to Pro-138 carry the Gly-cisPro motif, important for rejection of L-amino acids motif.

Belongs to the DTD family. Homodimer.

The protein localises to the cytoplasm. The enzyme catalyses glycyl-tRNA(Ala) + H2O = tRNA(Ala) + glycine + H(+). The catalysed reaction is a D-aminoacyl-tRNA + H2O = a tRNA + a D-alpha-amino acid + H(+). In terms of biological role, an aminoacyl-tRNA editing enzyme that deacylates mischarged D-aminoacyl-tRNAs. Also deacylates mischarged glycyl-tRNA(Ala), protecting cells against glycine mischarging by AlaRS. Acts via tRNA-based rather than protein-based catalysis; rejects L-amino acids rather than detecting D-amino acids in the active site. By recycling D-aminoacyl-tRNA to D-amino acids and free tRNA molecules, this enzyme counteracts the toxicity associated with the formation of D-aminoacyl-tRNA entities in vivo and helps enforce protein L-homochirality. The polypeptide is D-aminoacyl-tRNA deacylase (Aeromonas hydrophila subsp. hydrophila (strain ATCC 7966 / DSM 30187 / BCRC 13018 / CCUG 14551 / JCM 1027 / KCTC 2358 / NCIMB 9240 / NCTC 8049)).